The following is a 415-amino-acid chain: Probable glucan 1,3-beta-glucosidase A (415 aa).

The signal sequence occupies residues 1–22 (MLSRLSQTALVALSLMTVLTEA). Catalysis depends on E210, which acts as the Proton donor. 2 cysteine pairs are disulfide-bonded: C290/C414 and C315/C341. E307 serves as the catalytic Nucleophile. A disordered region spans residues 335–359 (SPRYGDCGNKRQGSSSGLSEQERSD).

It belongs to the glycosyl hydrolase 5 (cellulase A) family. As to quaternary structure, monomer. Mn(2+) serves as cofactor.

It localises to the secreted. The catalysed reaction is Successive hydrolysis of beta-D-glucose units from the non-reducing ends of (1-&gt;3)-beta-D-glucans, releasing alpha-glucose.. Beta-glucanases participate in the metabolism of beta-glucan, the main structural component of the cell wall. It could also function biosynthetically as a transglycosylase. The chain is Probable glucan 1,3-beta-glucosidase A (exgA) from Aspergillus clavatus (strain ATCC 1007 / CBS 513.65 / DSM 816 / NCTC 3887 / NRRL 1 / QM 1276 / 107).